The primary structure comprises 132 residues: Small ribosomal subunit protein uS8 (132 aa).

Belongs to the universal ribosomal protein uS8 family. In terms of assembly, part of the 30S ribosomal subunit. Contacts proteins S5 and S12.

One of the primary rRNA binding proteins, it binds directly to 16S rRNA central domain where it helps coordinate assembly of the platform of the 30S subunit. The sequence is that of Small ribosomal subunit protein uS8 from Rickettsia conorii (strain ATCC VR-613 / Malish 7).